The primary structure comprises 942 residues: Sucrose synthase 6 (942 aa).

The GT-B glycosyltransferase stretch occupies residues 281-759 (TVFNVVIFSV…GLKRIYECYT (479 aa)). Residues 830–862 (TTNLGAGSKQKEVTETEKTKQKSKDGQEQHDVK) are disordered. Residues 838-862 (KQKEVTETEKTKQKSKDGQEQHDVK) show a composition bias toward basic and acidic residues.

This sequence belongs to the glycosyltransferase 1 family. Plant sucrose synthase subfamily. In terms of tissue distribution, detected in the whole plant but more precisely confined to the vasculature in cotyledons, leaves, petals, anthers and roots.

The protein localises to the secreted. The protein resides in the cell wall. It catalyses the reaction an NDP-alpha-D-glucose + D-fructose = a ribonucleoside 5'-diphosphate + sucrose + H(+). In terms of biological role, sucrose-cleaving enzyme that provides UDP-glucose and fructose for various metabolic pathways. Functions in callose synthesis at the site of phloem sieve elements. In Arabidopsis thaliana (Mouse-ear cress), this protein is Sucrose synthase 6 (SUS6).